Here is a 159-residue protein sequence, read N- to C-terminus: Probable metallophosphoesterase MPN_126 (159 aa).

Residues D9, H11, D34, N53, H75, H107, and H109 each coordinate Mn(2+).

The protein belongs to the metallophosphoesterase superfamily. YfcE family. Requires Mn(2+) as cofactor.

This Mycoplasma pneumoniae (strain ATCC 29342 / M129 / Subtype 1) (Mycoplasmoides pneumoniae) protein is Probable metallophosphoesterase MPN_126.